Reading from the N-terminus, the 98-residue chain is NADH-ubiquinone oxidoreductase chain 4L (98 aa).

3 helical membrane passes run 1–21, 29–49, and 61–81; these read MSIT…GLLM, SLLC…MAIL, and IILL…LVMV.

It belongs to the complex I subunit 4L family. In terms of assembly, core subunit of respiratory chain NADH dehydrogenase (Complex I) which is composed of 45 different subunits.

It localises to the mitochondrion inner membrane. It carries out the reaction a ubiquinone + NADH + 5 H(+)(in) = a ubiquinol + NAD(+) + 4 H(+)(out). In terms of biological role, core subunit of the mitochondrial membrane respiratory chain NADH dehydrogenase (Complex I) which catalyzes electron transfer from NADH through the respiratory chain, using ubiquinone as an electron acceptor. Part of the enzyme membrane arm which is embedded in the lipid bilayer and involved in proton translocation. This chain is NADH-ubiquinone oxidoreductase chain 4L (MT-ND4L), found in Mesophylla macconnelli (MacConnell's bat).